The following is a 190-amino-acid chain: Small ribosomal subunit protein mS23 (190 aa).

Position 2 is an N-acetylalanine (A2). N6-acetyllysine is present on K102. The segment at 139-190 (RTQHGGSHVSRKSEHLSVRPQTALEENETQKEVPQDQHLEAPADQSKGLLPP) is disordered. A compositionally biased stretch (basic and acidic residues) spans 166-179 (ETQKEVPQDQHLEA).

The protein belongs to the mitochondrion-specific ribosomal protein mS23 family. In terms of assembly, component of the mitochondrial small ribosomal subunit (mt-SSU). Mature mammalian 55S mitochondrial ribosomes consist of a small (28S) and a large (39S) subunit. The 28S small subunit contains a 12S ribosomal RNA (12S mt-rRNA) and 30 different proteins. The 39S large subunit contains a 16S rRNA (16S mt-rRNA), a copy of mitochondrial valine transfer RNA (mt-tRNA(Val)), which plays an integral structural role, and 52 different proteins.

The protein resides in the mitochondrion. In Homo sapiens (Human), this protein is Small ribosomal subunit protein mS23 (MRPS23).